The following is a 661-amino-acid chain: UvrABC system protein B (661 aa).

The Helicase ATP-binding domain occupies 26 to 413; sequence KGIQEGKKHQ…TDEMVEQIIR (388 aa). 39-46 serves as a coordination point for ATP; it reads GATGTGKT. The short motif at 92–115 is the Beta-hairpin element; the sequence is YYDYYQPEAYVPQTDTFIEKDASI. Residues 430–596 enclose the Helicase C-terminal domain; it reads QIDDLIGEIQ…TINKEIRDVI (167 aa). Residues 625-660 form the UVR domain; that stretch reads QKVVEQMEHEMKEAAKALDFERAAELRDLLLELKAE.

Belongs to the UvrB family. Forms a heterotetramer with UvrA during the search for lesions. Interacts with UvrC in an incision complex.

The protein resides in the cytoplasm. Functionally, the UvrABC repair system catalyzes the recognition and processing of DNA lesions. A damage recognition complex composed of 2 UvrA and 2 UvrB subunits scans DNA for abnormalities. Upon binding of the UvrA(2)B(2) complex to a putative damaged site, the DNA wraps around one UvrB monomer. DNA wrap is dependent on ATP binding by UvrB and probably causes local melting of the DNA helix, facilitating insertion of UvrB beta-hairpin between the DNA strands. Then UvrB probes one DNA strand for the presence of a lesion. If a lesion is found the UvrA subunits dissociate and the UvrB-DNA preincision complex is formed. This complex is subsequently bound by UvrC and the second UvrB is released. If no lesion is found, the DNA wraps around the other UvrB subunit that will check the other stand for damage. This chain is UvrABC system protein B, found in Bacillus subtilis (strain 168).